Reading from the N-terminus, the 238-residue chain is tRNA (guanine-N(7)-)-methyltransferase (238 aa).

Glu68, Glu93, Asp120, and Asp143 together coordinate S-adenosyl-L-methionine. Residue Asp143 is part of the active site. Substrate-binding positions include Lys147, Asp179, and 216–219 (TKFE).

Belongs to the class I-like SAM-binding methyltransferase superfamily. TrmB family.

It catalyses the reaction guanosine(46) in tRNA + S-adenosyl-L-methionine = N(7)-methylguanosine(46) in tRNA + S-adenosyl-L-homocysteine. The protein operates within tRNA modification; N(7)-methylguanine-tRNA biosynthesis. Catalyzes the formation of N(7)-methylguanine at position 46 (m7G46) in tRNA. The protein is tRNA (guanine-N(7)-)-methyltransferase of Shewanella denitrificans (strain OS217 / ATCC BAA-1090 / DSM 15013).